The sequence spans 265 residues: Sulfur carrier protein FdhD (265 aa).

The Cysteine persulfide intermediate role is filled by Cys-107.

It belongs to the FdhD family.

The protein resides in the cytoplasm. Its function is as follows. Required for formate dehydrogenase (FDH) activity. Acts as a sulfur carrier protein that transfers sulfur from IscS to the molybdenum cofactor prior to its insertion into FDH. This Staphylococcus aureus (strain NCTC 8325 / PS 47) protein is Sulfur carrier protein FdhD.